Consider the following 65-residue polypeptide: Beta-toxin Am IT (65 aa).

Residue E1 is modified to Pyrrolidone carboxylic acid (Glu); partial. An LCN-type CS-alpha/beta domain is found at 1 to 64; sequence EHGYLLDKYT…LWNYKTNKCK (64 aa). 4 disulfides stabilise this stretch: C12–C63, C16–C38, C23–C45, and C27–C47. Residue S65 is modified to Serine amide.

It belongs to the long (4 C-C) scorpion toxin superfamily. Sodium channel inhibitor family. In terms of tissue distribution, expressed by the venom gland.

The protein resides in the secreted. In terms of biological role, has a toxic effect on insects and mammals. On German cockroach larvae, it provokes contraction, paralysis and lethality. Intracerebroventricular injection into mice causes severe neurotoxic symptoms. It fully competes with the binding of the iodinated Css4 (AC P60266) on rat brain synaptosomes, with moderate affinity and in a concentration-dependent manner (EC(50)=25 nM). It may act on both site 3 and site 4 of voltage-gated sodium channels. This Androctonus mauritanicus mauritanicus (Scorpion) protein is Beta-toxin Am IT.